A 166-amino-acid polypeptide reads, in one-letter code: Phosphopantetheine adenylyltransferase (166 aa).

Threonine 9 contributes to the substrate binding site. ATP is bound by residues 9–10 (TF) and histidine 17. Substrate is bound by residues lysine 41, leucine 78, and arginine 92. ATP-binding positions include 93–95 (GLR), glutamate 103, and 128–134 (HQAIASK).

It belongs to the bacterial CoaD family. In terms of assembly, homohexamer. Requires Mg(2+) as cofactor.

The protein localises to the cytoplasm. The enzyme catalyses (R)-4'-phosphopantetheine + ATP + H(+) = 3'-dephospho-CoA + diphosphate. Its pathway is cofactor biosynthesis; coenzyme A biosynthesis; CoA from (R)-pantothenate: step 4/5. In terms of biological role, reversibly transfers an adenylyl group from ATP to 4'-phosphopantetheine, yielding dephospho-CoA (dPCoA) and pyrophosphate. The polypeptide is Phosphopantetheine adenylyltransferase (Roseobacter denitrificans (strain ATCC 33942 / OCh 114) (Erythrobacter sp. (strain OCh 114))).